The chain runs to 132 residues: MVNDTIADMLTRVRNANLARHQIVQVPSTKMTKNIADVLLEEGFIQNFEEVGDGINKQLLLSLKYKGKEREPVITALKRISRPGLRVYANRKELPRVLGGLGIAVISTSRGVLTDNKARHQGLGGEVLCYIW.

This sequence belongs to the universal ribosomal protein uS8 family. In terms of assembly, part of the 30S ribosomal subunit.

It localises to the plastid. The protein localises to the chloroplast. Its function is as follows. One of the primary rRNA binding proteins, it binds directly to 16S rRNA central domain where it helps coordinate assembly of the platform of the 30S subunit. In Rhodomonas salina (Cryptomonas salina), this protein is Small ribosomal subunit protein uS8c (rps8).